A 395-amino-acid chain; its full sequence is Digeranylgeranylglycerophospholipid reductase (395 aa).

9 residues coordinate FAD: A15, D34, C45, A46, A48, R97, A121, D276, and G288. R329 contributes to the a 2,3-bis-O-(geranylgeranyl)-sn-glycerol 1-phospholipid binding site.

This sequence belongs to the geranylgeranyl reductase family. DGGGPL reductase subfamily. FAD serves as cofactor.

It carries out the reaction a 2,3-bis-O-phytanyl-sn-glycerol 1-phospholipid + 8 A = a 2,3-bis-O-(geranylgeranyl)-sn-glycerol 1-phospholipid + 8 AH2. The enzyme catalyses 2,3-bis-O-(phytanyl)-sn-glycerol 1-phosphate + 8 A = 2,3-bis-O-(geranylgeranyl)-sn-glycerol 1-phosphate + 8 AH2. It catalyses the reaction CDP-2,3-bis-O-(geranylgeranyl)-sn-glycerol + 8 AH2 = CDP-2,3-bis-O-(phytanyl)-sn-glycerol + 8 A. The catalysed reaction is archaetidylserine + 8 AH2 = 2,3-bis-O-phytanyl-sn-glycero-3-phospho-L-serine + 8 A. It functions in the pathway membrane lipid metabolism; glycerophospholipid metabolism. Functionally, is involved in the reduction of 2,3-digeranylgeranylglycerophospholipids (unsaturated archaeols) into 2,3-diphytanylglycerophospholipids (saturated archaeols) in the biosynthesis of archaeal membrane lipids. Catalyzes the formation of archaetidic acid (2,3-di-O-phytanyl-sn-glyceryl phosphate) from 2,3-di-O-geranylgeranylglyceryl phosphate (DGGGP) via the hydrogenation of each double bond of the isoprenoid chains. Is also probably able to reduce double bonds of geranyl groups in CDP-2,3-bis-O-(geranylgeranyl)-sn-glycerol and archaetidylserine, thus acting at various stages in the biosynthesis of archaeal membrane lipids. The polypeptide is Digeranylgeranylglycerophospholipid reductase (Thermococcus kodakarensis (strain ATCC BAA-918 / JCM 12380 / KOD1) (Pyrococcus kodakaraensis (strain KOD1))).